We begin with the raw amino-acid sequence, 467 residues long: tRNA-2-methylthio-N(6)-dimethylallyladenosine synthase (467 aa).

One can recognise an MTTase N-terminal domain in the interval 5–125 (RKLHIKSYGC…LPQLLAQASR (121 aa)). Residues Cys14, Cys50, Cys88, Cys166, Cys170, and Cys173 each contribute to the [4Fe-4S] cluster site. A Radical SAM core domain is found at 152 to 384 (RARGVSAFVT…QSLIDSQQAA (233 aa)). The 63-residue stretch at 387 to 449 (KAAIGSVVDV…RYSLLGELVA (63 aa)) folds into the TRAM domain.

Belongs to the methylthiotransferase family. MiaB subfamily. As to quaternary structure, monomer. Requires [4Fe-4S] cluster as cofactor.

It is found in the cytoplasm. The catalysed reaction is N(6)-dimethylallyladenosine(37) in tRNA + (sulfur carrier)-SH + AH2 + 2 S-adenosyl-L-methionine = 2-methylsulfanyl-N(6)-dimethylallyladenosine(37) in tRNA + (sulfur carrier)-H + 5'-deoxyadenosine + L-methionine + A + S-adenosyl-L-homocysteine + 2 H(+). Its function is as follows. Catalyzes the methylthiolation of N6-(dimethylallyl)adenosine (i(6)A), leading to the formation of 2-methylthio-N6-(dimethylallyl)adenosine (ms(2)i(6)A) at position 37 in tRNAs that read codons beginning with uridine. The sequence is that of tRNA-2-methylthio-N(6)-dimethylallyladenosine synthase from Bradyrhizobium sp. (strain ORS 278).